The chain runs to 726 residues: Catalase-peroxidase (726 aa).

The interval 1 to 34 is disordered; sequence MSMSDDTHNSLSTGKCPFHQGSHDRSAGAGTSSH. A cross-link (tryptophyl-tyrosyl-methioninium (Trp-Tyr) (with M-252)) is located at residues 105-226; it reads WHGAGTYRSV…LGATEMGLIY (122 aa). The active-site Proton acceptor is His-106. Positions 226 to 252 form a cross-link, tryptophyl-tyrosyl-methioninium (Tyr-Met) (with W-105); that stretch reads YVNPEGPDHSGEPLSAAAAIRATFGNM. Position 267 (His-267) interacts with heme b.

It belongs to the peroxidase family. Peroxidase/catalase subfamily. As to quaternary structure, homodimer or homotetramer. It depends on heme b as a cofactor. Post-translationally, formation of the three residue Trp-Tyr-Met cross-link is important for the catalase, but not the peroxidase activity of the enzyme.

It carries out the reaction H2O2 + AH2 = A + 2 H2O. The enzyme catalyses 2 H2O2 = O2 + 2 H2O. Its function is as follows. Bifunctional enzyme with both catalase and broad-spectrum peroxidase activity. This Citrobacter koseri (strain ATCC BAA-895 / CDC 4225-83 / SGSC4696) protein is Catalase-peroxidase.